Here is a 140-residue protein sequence, read N- to C-terminus: Nucleoside diphosphate kinase (140 aa).

Positions 11, 59, 87, 93, 104, and 114 each coordinate ATP. Catalysis depends on histidine 117, which acts as the Pros-phosphohistidine intermediate.

The protein belongs to the NDK family. Homotetramer. Mg(2+) serves as cofactor.

It localises to the cytoplasm. The enzyme catalyses a 2'-deoxyribonucleoside 5'-diphosphate + ATP = a 2'-deoxyribonucleoside 5'-triphosphate + ADP. It carries out the reaction a ribonucleoside 5'-diphosphate + ATP = a ribonucleoside 5'-triphosphate + ADP. In terms of biological role, major role in the synthesis of nucleoside triphosphates other than ATP. The ATP gamma phosphate is transferred to the NDP beta phosphate via a ping-pong mechanism, using a phosphorylated active-site intermediate. In Chelativorans sp. (strain BNC1), this protein is Nucleoside diphosphate kinase.